The primary structure comprises 427 residues: Serine hydroxymethyltransferase (427 aa).

A (6S)-5,6,7,8-tetrahydrofolate-binding site is contributed by 120 to 122 (GHI). Lysine 226 carries the post-translational modification N6-(pyridoxal phosphate)lysine. Glutamate 243 contacts (6S)-5,6,7,8-tetrahydrofolate.

This sequence belongs to the SHMT family. Homodimer. Requires pyridoxal 5'-phosphate as cofactor.

It is found in the cytoplasm. The protein operates within amino-acid biosynthesis; glycine biosynthesis; glycine from L-serine: step 1/1. Its function is as follows. Catalyzes the reversible interconversion of serine and glycine with a modified folate serving as the one-carbon carrier. Also exhibits a pteridine-independent aldolase activity toward beta-hydroxyamino acids, producing glycine and aldehydes, via a retro-aldol mechanism. This is Serine hydroxymethyltransferase from Thermococcus gammatolerans (strain DSM 15229 / JCM 11827 / EJ3).